The sequence spans 209 residues: Large ribosomal subunit protein uL4 (209 aa).

A disordered region spans residues 50–78 (STLKKGEVSGGGKKPYQQKHTGRARQGSI).

The protein belongs to the universal ribosomal protein uL4 family. As to quaternary structure, part of the 50S ribosomal subunit.

Its function is as follows. One of the primary rRNA binding proteins, this protein initially binds near the 5'-end of the 23S rRNA. It is important during the early stages of 50S assembly. It makes multiple contacts with different domains of the 23S rRNA in the assembled 50S subunit and ribosome. Functionally, forms part of the polypeptide exit tunnel. The protein is Large ribosomal subunit protein uL4 of Mycoplasmoides gallisepticum (strain R(low / passage 15 / clone 2)) (Mycoplasma gallisepticum).